A 1664-amino-acid polypeptide reads, in one-letter code: DNA-directed RNA polymerase I subunit RPA190 (1664 aa).

Zn(2+) is bound by residues C62, C65, C72, H75, C102, C105, C233, and C236. The interval 280-310 (QAKKLDGSNEASANDEESFDVGRNPTTRPKT) is disordered. Residues D627, D629, and D631 each contribute to the Mg(2+) site. S889 is modified (phosphoserine). Residues 992–1004 (PQEYYFHCMAGRE) are bridging helix. The tract at residues 1343 to 1423 (DIGVAVPRLQ…DSDSEDEDVD (81 aa)) is disordered. A compositionally biased stretch (basic and acidic residues) spans 1393-1414 (ETMREAEKSSDEEGIDSDKESD). S1636 is subject to Phosphoserine.

This sequence belongs to the RNA polymerase beta' chain family. Component of the RNA polymerase I (Pol I) complex consisting of 14 subunits: RPA135, RPA190, RPC40, RPA14, RPB5, RPO26, RPA43, RPB8, RPA12, RPB10, RPC19, RPC10, RPA49 and RPA34. The complex is composed of a horseshoe-shaped core containing ten subunits (RPA135, RPA190, RPB5, RPO26, RPB8, RPB10, RPC10, RPA12, RPC19 and RPC40) where RPA135 and RPA190 form the DNA-binding cleft. Outside of the core, RPA14 and RPA43 form the stalk that mediates interactions with transcription initiation factors and newly synthesized RNA.

The protein resides in the nucleus. Its subcellular location is the nucleolus. It carries out the reaction RNA(n) + a ribonucleoside 5'-triphosphate = RNA(n+1) + diphosphate. In terms of biological role, DNA-dependent RNA polymerases catalyze the transcription of DNA into RNA using the four ribonucleoside triphosphates as substrates. Component of RNA polymerase I (Pol I) which synthesizes ribosomal RNA precursors. Besides, RNA polymerase I has intrinsic RNA cleavage activity. RPA190 and RPA135 both contribute to the polymerase catalytic activity and together form the Pol I active center. In addition, subunit RPA12 contributes a catalytic zinc ribbon that is required for RNA cleavage by Pol I. A single stranded DNA template strand of the promoter is positioned within the central active site cleft of Pol I. A bridging helix emanates from RPA190 and crosses the cleft near the catalytic site and is thought to promote translocation of Pol I by acting as a ratchet that moves the RNA-DNA hybrid through the active site by switching from straight to bent conformations at each step of nucleotide addition. The protein is DNA-directed RNA polymerase I subunit RPA190 (RPA190) of Saccharomyces cerevisiae (strain ATCC 204508 / S288c) (Baker's yeast).